The primary structure comprises 84 residues: MSLFGFLQRKPTAQVARNRLQILLAHERGLEGNADLAAILQEEIIAVIAKHVEIDREKVQVKLDRGSAFSTLEIDVEMPNGKKA.

This sequence belongs to the MinE family.

Functionally, prevents the cell division inhibition by proteins MinC and MinD at internal division sites while permitting inhibition at polar sites. This ensures cell division at the proper site by restricting the formation of a division septum at the midpoint of the long axis of the cell. The polypeptide is Cell division topological specificity factor (Granulibacter bethesdensis (strain ATCC BAA-1260 / CGDNIH1)).